The following is a 272-amino-acid chain: Rhamnulose-1-phosphate aldolase (272 aa).

Glu-117 is an active-site residue. Residues His-141, His-143, and His-212 each coordinate Zn(2+).

Belongs to the aldolase class II family. RhaD subfamily. It depends on Zn(2+) as a cofactor.

The protein resides in the cytoplasm. The catalysed reaction is L-rhamnulose 1-phosphate = (S)-lactaldehyde + dihydroxyacetone phosphate. Its pathway is carbohydrate degradation; L-rhamnose degradation; glycerone phosphate from L-rhamnose: step 3/3. Functionally, catalyzes the reversible cleavage of L-rhamnulose-1-phosphate to dihydroxyacetone phosphate (DHAP) and L-lactaldehyde. The protein is Rhamnulose-1-phosphate aldolase of Mannheimia succiniciproducens (strain KCTC 0769BP / MBEL55E).